Here is a 246-residue protein sequence, read N- to C-terminus: tRNA (guanine-N(1)-)-methyltransferase (246 aa).

Residues G117 and 137-142 (IGDYVL) contribute to the S-adenosyl-L-methionine site.

Belongs to the RNA methyltransferase TrmD family. In terms of assembly, homodimer.

It is found in the cytoplasm. The catalysed reaction is guanosine(37) in tRNA + S-adenosyl-L-methionine = N(1)-methylguanosine(37) in tRNA + S-adenosyl-L-homocysteine + H(+). Functionally, specifically methylates guanosine-37 in various tRNAs. This chain is tRNA (guanine-N(1)-)-methyltransferase, found in Acinetobacter baumannii (strain SDF).